Reading from the N-terminus, the 200-residue chain is Large ribosomal subunit protein uL4 (200 aa).

A disordered region spans residues 42-65 (TRAQKTRSEVSGGGAKPWRQKGTG).

The protein belongs to the universal ribosomal protein uL4 family. Part of the 50S ribosomal subunit.

One of the primary rRNA binding proteins, this protein initially binds near the 5'-end of the 23S rRNA. It is important during the early stages of 50S assembly. It makes multiple contacts with different domains of the 23S rRNA in the assembled 50S subunit and ribosome. In terms of biological role, forms part of the polypeptide exit tunnel. The chain is Large ribosomal subunit protein uL4 from Aliivibrio fischeri (strain MJ11) (Vibrio fischeri).